The sequence spans 616 residues: Endonuclease 8-like 3 (616 aa).

The segment at 271–305 adopts an FPG-type zinc-finger fold; sequence KVYKRPNCGQCGTKITVCRLGEHNRMTYFCPKCQK. The RanBP2-type zinc-finger motif lies at 341-370; that stretch reads KEEHWACAVCTLINKPSDKQCDACLTLRPE. The tract at residues 491–524 is disordered; that stretch reads LKTGHTTSNTIHLSSTISSPQSKMTGDAAAKTGN. Polar residues predominate over residues 494-514; it reads GHTTSNTIHLSSTISSPQSKM. 8 residues coordinate Zn(2+): cysteine 527, histidine 530, cysteine 553, cysteine 561, cysteine 574, histidine 576, cysteine 599, and cysteine 607. 2 GRF-type zinc fingers span residues 527 to 570 and 574 to 616; these read CSAH…ADLH and CNHG…AKTE.

It belongs to the FPG family.

The protein resides in the nucleus. Its subcellular location is the chromosome. The enzyme catalyses 2'-deoxyribonucleotide-(2'-deoxyribose 5'-phosphate)-2'-deoxyribonucleotide-DNA = a 3'-end 2'-deoxyribonucleotide-(2,3-dehydro-2,3-deoxyribose 5'-phosphate)-DNA + a 5'-end 5'-phospho-2'-deoxyribonucleoside-DNA + H(+). Functionally, DNA glycosylase which prefers single-stranded DNA (ssDNA), or partially ssDNA structures such as bubble and fork structures, to double-stranded DNA (dsDNA). Mediates interstrand cross-link repair in response to replication stress: recruited to replication stress sites via interaction with ubiquitinated CMG helicase and acts by mediating DNA glycosylase activity. Cleaves one of the two N-glycosyl bonds comprising the interstrand cross-link, which avoids the formation of a double-strand break but generates an abasic site that is bypassed by translesion synthesis polymerases. The protein is Endonuclease 8-like 3 of Xenopus laevis (African clawed frog).